The sequence spans 300 residues: Porphobilinogen deaminase (300 aa).

Cys239 is modified (S-(dipyrrolylmethanemethyl)cysteine).

This sequence belongs to the HMBS family. Monomer. Dipyrromethane is required as a cofactor.

The enzyme catalyses 4 porphobilinogen + H2O = hydroxymethylbilane + 4 NH4(+). The protein operates within porphyrin-containing compound metabolism; protoporphyrin-IX biosynthesis; coproporphyrinogen-III from 5-aminolevulinate: step 2/4. Functionally, tetrapolymerization of the monopyrrole PBG into the hydroxymethylbilane pre-uroporphyrinogen in several discrete steps. This chain is Porphobilinogen deaminase, found in Francisella tularensis subsp. tularensis (strain FSC 198).